The chain runs to 323 residues: Pectate lyase A (323 aa).

The first 31 residues, 1–31, serve as a signal peptide directing secretion; it reads MTNFKWIVAAAGLLFGQVLAAPTATSTHAKR. Residue asparagine 95 is glycosylated (N-linked (GlcNAc...) asparagine). Residues aspartate 136, aspartate 165, and aspartate 169 each coordinate Ca(2+). The active site involves arginine 222.

The protein belongs to the polysaccharide lyase 1 family. Ca(2+) serves as cofactor.

Its subcellular location is the secreted. The enzyme catalyses Eliminative cleavage of (1-&gt;4)-alpha-D-galacturonan to give oligosaccharides with 4-deoxy-alpha-D-galact-4-enuronosyl groups at their non-reducing ends.. Its function is as follows. Pectinolytic enzyme consist of four classes of enzymes: pectin lyase, polygalacturonase, pectin methylesterase and rhamnogalacturonase. Among pectinolytic enzymes, pectin lyase is the most important in depolymerization of pectin, since it cleaves internal glycosidic bonds of highly methylated pectins. Favors pectate, the anion, over pectin, the methyl ester. This is Pectate lyase A (plyA) from Aspergillus niger.